Consider the following 632-residue polypeptide: 1-deoxy-D-xylulose-5-phosphate synthase (632 aa).

Thiamine diphosphate is bound by residues His72 and 113–115 (GHA). A Mg(2+)-binding site is contributed by Asp144. Residues 145 to 146 (GA), Asn174, Tyr285, and Glu368 contribute to the thiamine diphosphate site. Residue Asn174 participates in Mg(2+) binding.

It belongs to the transketolase family. DXPS subfamily. As to quaternary structure, homodimer. It depends on Mg(2+) as a cofactor. Requires thiamine diphosphate as cofactor.

The enzyme catalyses D-glyceraldehyde 3-phosphate + pyruvate + H(+) = 1-deoxy-D-xylulose 5-phosphate + CO2. Its pathway is metabolic intermediate biosynthesis; 1-deoxy-D-xylulose 5-phosphate biosynthesis; 1-deoxy-D-xylulose 5-phosphate from D-glyceraldehyde 3-phosphate and pyruvate: step 1/1. Catalyzes the acyloin condensation reaction between C atoms 2 and 3 of pyruvate and glyceraldehyde 3-phosphate to yield 1-deoxy-D-xylulose-5-phosphate (DXP). The polypeptide is 1-deoxy-D-xylulose-5-phosphate synthase (Cyanothece sp. (strain PCC 7425 / ATCC 29141)).